The following is a 684-amino-acid chain: Homoaconitase, mitochondrial (684 aa).

The [4Fe-4S] cluster site is built by cysteine 337, cysteine 397, and cysteine 400.

Belongs to the aconitase/IPM isomerase family. It depends on [4Fe-4S] cluster as a cofactor.

The protein resides in the mitochondrion. The enzyme catalyses (2R,3S)-homoisocitrate = cis-homoaconitate + H2O. It participates in amino-acid biosynthesis; L-lysine biosynthesis via AAA pathway; L-alpha-aminoadipate from 2-oxoglutarate: step 3/5. Catalyzes the reversible hydration of cis-homoaconitate to (2R,3S)-homoisocitrate, a step in the alpha-aminoadipate pathway for lysine biosynthesis. The sequence is that of Homoaconitase, mitochondrial (LYS4) from Candida albicans (strain SC5314 / ATCC MYA-2876) (Yeast).